A 141-amino-acid polypeptide reads, in one-letter code: Ly6/PLAUR domain-containing protein 1 (141 aa).

The first 20 residues, 1–20 (MWVLGIAATFCGLFWLPGLA), serve as a signal peptide directing secretion. 6 cysteine pairs are disulfide-bonded: Cys-25–Cys-54, Cys-28–Cys-37, Cys-46–Cys-71, Cys-77–Cys-100, Cys-88–Cys-97, and Cys-101–Cys-106. Residues 25–108 (CYQCEEFQLN…SCCNTPLCNG (84 aa)) enclose the UPAR/Ly6 domain. An N-linked (GlcNAc...) asparagine glycan is attached at Asn-45. Gly-115 carries GPI-anchor amidated glycine lipidation. The propeptide at 116–141 (SSASAIRPELFTTVLFFNLALCLAHC) is removed in mature form.

As to quaternary structure, interacts with CHRNA4 and nAChRs containing alpha-4:beta-2 (CHRNA4:CHRNB2) and alpha-7 (CHRNA7) subunits.

It is found in the cell membrane. Its function is as follows. Believed to act as a modulator of nicotinic acetylcholine receptors (nAChRs) activity. In vitro increases receptor desensitization and decreases affinity for ACh of alpha-4:beta-2-containing nAChRs. May play a role in the intracellular trafficking of alpha-4:beta-2 and alpha-7-containing nAChRs and may inhibit their expression at the cell surface. May be involved in the control of anxiety. This is Ly6/PLAUR domain-containing protein 1 (Lypd1) from Rattus norvegicus (Rat).